The following is a 394-amino-acid chain: Phosphopentomutase (394 aa).

6 residues coordinate Mn(2+): Asp13, Asp286, His291, Asp327, His328, and His339.

Belongs to the phosphopentomutase family. It depends on Mn(2+) as a cofactor.

The protein localises to the cytoplasm. The catalysed reaction is 2-deoxy-alpha-D-ribose 1-phosphate = 2-deoxy-D-ribose 5-phosphate. It carries out the reaction alpha-D-ribose 1-phosphate = D-ribose 5-phosphate. It functions in the pathway carbohydrate degradation; 2-deoxy-D-ribose 1-phosphate degradation; D-glyceraldehyde 3-phosphate and acetaldehyde from 2-deoxy-alpha-D-ribose 1-phosphate: step 1/2. Isomerase that catalyzes the conversion of deoxy-ribose 1-phosphate (dRib-1-P) and ribose 1-phosphate (Rib-1-P) to deoxy-ribose 5-phosphate (dRib-5-P) and ribose 5-phosphate (Rib-5-P), respectively. The protein is Phosphopentomutase of Bacillus cereus (strain AH187).